Here is a 134-residue protein sequence, read N- to C-terminus: MLSPKRTKFRRPHRGHRRGRALRGNTIAFGDFAIQALESSWVTSRQIEAARRAMTRYARRGGKIWIRIFPDKAITMRPAETRMGSGKGSPEYWVAVVKAQKILFEMKGVPETIARASMRIACFKMPMKTRILQR.

This sequence belongs to the universal ribosomal protein uL16 family. As to quaternary structure, part of the 50S ribosomal subunit.

Its subcellular location is the plastid. The protein resides in the chloroplast. The sequence is that of Large ribosomal subunit protein uL16c from Nephroselmis olivacea (Green alga).